Here is a 61-residue protein sequence, read N- to C-terminus: uncharacterized protein (61 aa).

Transmembrane regions (helical) follow at residues 4–24 (IIAFIWTFLLSHMACYLVASM) and 34–54 (SSVIAVVLYVLIMVLAEIMPM).

The protein localises to the cell membrane. This is an uncharacterized protein from Bacillus subtilis (strain 168).